Reading from the N-terminus, the 293-residue chain is NAD-dependent protein deacetylase (293 aa).

The Deacetylase sirtuin-type domain maps to 1 to 284 (MTVAITQTGP…QPPDPLHTAT (284 aa)). Residues 27–47 (GAGC…GGWK) and 105–108 (QNVD) contribute to the NAD(+) site. Residue His-123 is the Proton acceptor of the active site. Residues Cys-131, Cys-134, Cys-182, and Cys-185 each coordinate Zn(2+). Residues 222–224 (GSS), 248–250 (NFG), and Cys-266 each bind NAD(+).

Belongs to the sirtuin family. Class II subfamily. It depends on Zn(2+) as a cofactor.

The protein resides in the cytoplasm. It catalyses the reaction N(6)-acetyl-L-lysyl-[protein] + NAD(+) + H2O = 2''-O-acetyl-ADP-D-ribose + nicotinamide + L-lysyl-[protein]. Functionally, NAD-dependent protein deacetylase which modulates the activities of several enzymes which are inactive in their acetylated form. The chain is NAD-dependent protein deacetylase from Xanthomonas campestris pv. campestris (strain B100).